The sequence spans 82 residues: Toxin TdNa6 (82 aa).

The first 20 residues, 1–20, serve as a signal peptide directing secretion; sequence MKGMIMLISCLMLIEVVVGG. The region spanning 21-82 is the LCN-type CS-alpha/beta domain; it reads KEGYLLDRSN…KMWHLKTNKC (62 aa). Cystine bridges form between cysteine 32/cysteine 82, cysteine 36/cysteine 58, cysteine 44/cysteine 63, and cysteine 48/cysteine 65.

The protein belongs to the long (4 C-C) scorpion toxin superfamily. Sodium channel inhibitor family. Beta subfamily. Expressed by the venom gland.

It localises to the secreted. Beta toxins bind voltage-independently at site-4 of sodium channels (Nav) and shift the voltage of activation toward more negative potentials thereby affecting sodium channel activation and promoting spontaneous and repetitive firing. Is toxic to arthropods. This Tityus discrepans (Venezuelan scorpion) protein is Toxin TdNa6.